A 701-amino-acid polypeptide reads, in one-letter code: Translation factor GUF1, mitochondrial (701 aa).

The N-terminal 29 residues, Met-1–Tyr-29, are a transit peptide targeting the mitochondrion. Over residues Ser-23 to Pro-50 the composition is skewed to low complexity. Positions Ser-23–Met-85 are disordered. A tr-type G domain is found at Glu-98 to Thr-283. GTP-binding positions include Ala-107–Ser-114, Asp-172–His-176, and Asn-226–Asp-229.

It belongs to the TRAFAC class translation factor GTPase superfamily. Classic translation factor GTPase family. LepA subfamily.

The protein localises to the mitochondrion inner membrane. It carries out the reaction GTP + H2O = GDP + phosphate + H(+). Functionally, promotes mitochondrial protein synthesis. May act as a fidelity factor of the translation reaction, by catalyzing a one-codon backward translocation of tRNAs on improperly translocated ribosomes. Binds to mitochondrial ribosomes in a GTP-dependent manner. The chain is Translation factor GUF1, mitochondrial from Pyricularia oryzae (strain 70-15 / ATCC MYA-4617 / FGSC 8958) (Rice blast fungus).